Consider the following 140-residue polypeptide: MAVTRTFSIIKPDATRRNLTGAVTKMLEEAGLRVVASKRIHMSREQAEGFYAVHKERPFFGELVEFMISGPVVVQVLEGEDAVKRNRDIMGATNPKDAAPGTIRKELAESIEANSVHGSDSEENAAIEIAYFFKPEEIVG.

Positions 11, 59, 87, 93, 104, and 114 each coordinate ATP. H117 serves as the catalytic Pros-phosphohistidine intermediate.

It belongs to the NDK family. Homotetramer. Mg(2+) serves as cofactor.

It localises to the cytoplasm. The catalysed reaction is a 2'-deoxyribonucleoside 5'-diphosphate + ATP = a 2'-deoxyribonucleoside 5'-triphosphate + ADP. The enzyme catalyses a ribonucleoside 5'-diphosphate + ATP = a ribonucleoside 5'-triphosphate + ADP. In terms of biological role, major role in the synthesis of nucleoside triphosphates other than ATP. The ATP gamma phosphate is transferred to the NDP beta phosphate via a ping-pong mechanism, using a phosphorylated active-site intermediate. This is Nucleoside diphosphate kinase from Novosphingobium aromaticivorans (strain ATCC 700278 / DSM 12444 / CCUG 56034 / CIP 105152 / NBRC 16084 / F199).